The sequence spans 156 residues: Endoribonuclease YbeY (156 aa).

Zn(2+)-binding residues include His114, His118, and His124.

This sequence belongs to the endoribonuclease YbeY family. Requires Zn(2+) as cofactor.

The protein localises to the cytoplasm. Single strand-specific metallo-endoribonuclease involved in late-stage 70S ribosome quality control and in maturation of the 3' terminus of the 16S rRNA. The sequence is that of Endoribonuclease YbeY from Sodalis glossinidius (strain morsitans).